Consider the following 437-residue polypeptide: Transcription factor E2F2 (437 aa).

Residues 65–105 (ATPHGPEGQVVRCLPAGRLPAKRKLDLEGIGRPVVPEFPTP) form a cyclin A/CDK2 binding region. A DNA-binding region spans residues 107–196 (GKCIRVDGLP…KNNIQWVGRG (90 aa)). The leucine-zipper stretch occupies residues 155–176 (LNWAAEVLDVQKRRIYDITNVL). A DEF box motif is present at residues 160–196 (EVLDVQKRRIYDITNVLEGIQLIRKKAKNNIQWVGRG). The segment at 197–289 (MFEDPTRPGK…PDRTEDNLQI (93 aa)) is dimerization. The segment at 307–368 (VQEPDSPSEE…APPPPSLVPL (62 aa)) is disordered. Residues 315-330 (EEPLPSTSTLCPSPDS) show a composition bias toward low complexity. Over residues 351-365 (APAPTPQQAPPPPSL) the composition is skewed to pro residues. The segment at 359-437 (APPPPSLVPL…SYDLGDLLIN (79 aa)) is transactivation. Residues 410–427 (DDYLWGLEAGEGISDLFD) form a retinoblastoma protein binding region.

It belongs to the E2F/DP family. In terms of assembly, component of the DRTF1/E2F transcription factor complex. Forms heterodimers with DP family members. The E2F2 complex binds specifically hypophosphorylated retinoblastoma protein RB1. During the cell cycle, RB1 becomes phosphorylated in mid-to-late G1 phase, detaches from the DRTF1/E2F complex, rendering E2F transcriptionally active. Viral oncoproteins, notably E1A, T-antigen and HPV E7, are capable of sequestering RB1, thus releasing the active complex. Binds EAPP. Post-translationally, phosphorylated by CDK2 and cyclin A-CDK2 in the S-phase. As to expression, highest level of expression is found in placenta, low levels are found in lung. Found as well in many immortalized cell lines derived from tumor samples.

The protein localises to the nucleus. Its function is as follows. Transcription activator that binds DNA cooperatively with DP proteins through the E2 recognition site, 5'-TTTC[CG]CGC-3' found in the promoter region of a number of genes whose products are involved in cell cycle regulation or in DNA replication. The DRTF1/E2F complex functions in the control of cell-cycle progression from g1 to s phase. E2F2 binds specifically to RB1 in a cell-cycle dependent manner. In Homo sapiens (Human), this protein is Transcription factor E2F2 (E2F2).